Reading from the N-terminus, the 350-residue chain is Small ribosomal subunit biogenesis GTPase RsgA (350 aa).

Positions 1-30 (MSKRKLTQNQQRRIQSNNAKTLHRHQHRHK) are disordered. The span at 7 to 20 (TQNQQRRIQSNNAK) shows a compositional bias: polar residues. Residues 21–30 (TLHRHQHRHK) show a composition bias toward basic residues. A CP-type G domain is found at 106–274 (HNQIVRPDYY…LIDSPGIREF (169 aa)). GTP is bound by residues 162 to 165 (NKAD) and 216 to 224 (GQSGVGKSS). Residues cysteine 298, cysteine 303, histidine 305, and cysteine 311 each contribute to the Zn(2+) site.

This sequence belongs to the TRAFAC class YlqF/YawG GTPase family. RsgA subfamily. Monomer. Associates with 30S ribosomal subunit, binds 16S rRNA. Requires Zn(2+) as cofactor.

The protein resides in the cytoplasm. Its function is as follows. One of several proteins that assist in the late maturation steps of the functional core of the 30S ribosomal subunit. Helps release RbfA from mature subunits. May play a role in the assembly of ribosomal proteins into the subunit. Circularly permuted GTPase that catalyzes slow GTP hydrolysis, GTPase activity is stimulated by the 30S ribosomal subunit. The polypeptide is Small ribosomal subunit biogenesis GTPase RsgA (Histophilus somni (strain 2336) (Haemophilus somnus)).